A 211-amino-acid chain; its full sequence is Urease accessory protein UreE (211 aa).

The segment at 170–211 (EHHGHSHDRGCDHSHSHSHDHDHDHGHVHGPGCGHAPHHRHD) is disordered. Residues 176–196 (HDRGCDHSHSHSHDHDHDHGH) are compositionally biased toward basic and acidic residues.

It belongs to the UreE family.

Its subcellular location is the cytoplasm. Functionally, involved in urease metallocenter assembly. Binds nickel. Probably functions as a nickel donor during metallocenter assembly. The protein is Urease accessory protein UreE of Ralstonia nicotianae (strain ATCC BAA-1114 / GMI1000) (Ralstonia solanacearum).